We begin with the raw amino-acid sequence, 360 residues long: Photosystem II protein D1 (360 aa).

Transmembrane regions (helical) follow at residues 29-46 (YVGW…TATT), 118-133 (HFLL…QWEL), and 142-156 (WICV…AATA). His-118 contacts chlorophyll a. Residue Tyr-126 participates in pheophytin a binding. [CaMn4O5] cluster contacts are provided by Asp-170 and Glu-189. The helical transmembrane segment at 197-218 (FHMLGVAGVFGGSLFSAMHGSL) threads the bilayer. His-198 serves as a coordination point for chlorophyll a. A quinone-binding positions include His-215 and 264–265 (SF). His-215 provides a ligand contact to Fe cation. His-272 contacts Fe cation. The helical transmembrane segment at 274–288 (FLGAWPVIGIWFTAM) threads the bilayer. Positions 332, 333, 342, and 344 each coordinate [CaMn4O5] cluster. Positions 345-360 (SGEQAPVALTAPAING) are excised as a propeptide.

This sequence belongs to the reaction center PufL/M/PsbA/D family. PSII is composed of 1 copy each of membrane proteins PsbA, PsbB, PsbC, PsbD, PsbE, PsbF, PsbH, PsbI, PsbJ, PsbK, PsbL, PsbM, PsbT, PsbX, PsbY, PsbZ, Psb30/Ycf12, peripheral proteins PsbO, CyanoQ (PsbQ), PsbU, PsbV and a large number of cofactors. It forms dimeric complexes. It depends on The D1/D2 heterodimer binds P680, chlorophylls that are the primary electron donor of PSII, and subsequent electron acceptors. It shares a non-heme iron and each subunit binds pheophytin, quinone, additional chlorophylls, carotenoids and lipids. D1 provides most of the ligands for the Mn4-Ca-O5 cluster of the oxygen-evolving complex (OEC). There is also a Cl(-1) ion associated with D1 and D2, which is required for oxygen evolution. The PSII complex binds additional chlorophylls, carotenoids and specific lipids. as a cofactor. Post-translationally, tyr-161 forms a radical intermediate that is referred to as redox-active TyrZ, YZ or Y-Z. C-terminally processed by CtpA; processing is essential to allow assembly of the oxygen-evolving complex and thus photosynthetic growth.

It is found in the cellular thylakoid membrane. The catalysed reaction is 2 a plastoquinone + 4 hnu + 2 H2O = 2 a plastoquinol + O2. Its function is as follows. Photosystem II (PSII) is a light-driven water:plastoquinone oxidoreductase that uses light energy to abstract electrons from H(2)O, generating O(2) and a proton gradient subsequently used for ATP formation. It consists of a core antenna complex that captures photons, and an electron transfer chain that converts photonic excitation into a charge separation. The D1/D2 (PsbA/PsbD) reaction center heterodimer binds P680, the primary electron donor of PSII as well as several subsequent electron acceptors. This Microcystis aeruginosa protein is Photosystem II protein D1.